The sequence spans 290 residues: Zinc-finger homeodomain protein 2 (290 aa).

Residues 1 to 15 (MDFDDHDEGDGDEEM) show a composition bias toward acidic residues. The segment at 1–59 (MDFDDHDEGDGDEEMPPMPLSSGYDAPMQPGLGGGGGGVPKPGGGVGGGGGGGGGGGGG) is disordered. Gly residues predominate over residues 31–59 (GLGGGGGGVPKPGGGVGGGGGGGGGGGGG). The ZF-HD dimerization-type; degenerate zinc-finger motif lies at 63-112 (YRECLKNHAVGIGGHAVDGCGEFMASGEEGSIDALRCAACGCHRNFHRKE). The homeobox DNA-binding region spans 226–289 (KKRFRTKFTQ…NNKHTLGKKA (64 aa)).

As to quaternary structure, homo- and heterodimer with other ZFHD proteins.

It is found in the nucleus. Its function is as follows. Putative transcription factor. This is Zinc-finger homeodomain protein 2 (ZHD2) from Oryza sativa subsp. japonica (Rice).